The primary structure comprises 453 residues: Bifunctional protein GlmU (453 aa).

The interval 1–226 (MFAIAILAAG…IDEVSGVNDR (226 aa)) is pyrophosphorylase. Residues 7–10 (LAAG), Lys21, Gln73, and 78–79 (GT) contribute to the UDP-N-acetyl-alpha-D-glucosamine site. Residue Asp103 coordinates Mg(2+). UDP-N-acetyl-alpha-D-glucosamine is bound by residues Gly140, Glu155, Asn170, and Asn224. Residue Asn224 participates in Mg(2+) binding. Residues 227–247 (AQLANCENLIQQSLRNHWMSK) are linker. Residues 248 to 453 (GVSFIDPESC…NWKTREETNQ (206 aa)) are N-acetyltransferase. Residues Arg329 and Lys347 each contribute to the UDP-N-acetyl-alpha-D-glucosamine site. His359 acts as the Proton acceptor in catalysis. The UDP-N-acetyl-alpha-D-glucosamine site is built by Tyr362 and Asn373. Positions 376, 419, and 436 each coordinate acetyl-CoA.

In the N-terminal section; belongs to the N-acetylglucosamine-1-phosphate uridyltransferase family. This sequence in the C-terminal section; belongs to the transferase hexapeptide repeat family. In terms of assembly, homotrimer. Requires Mg(2+) as cofactor.

It is found in the cytoplasm. The catalysed reaction is alpha-D-glucosamine 1-phosphate + acetyl-CoA = N-acetyl-alpha-D-glucosamine 1-phosphate + CoA + H(+). It carries out the reaction N-acetyl-alpha-D-glucosamine 1-phosphate + UTP + H(+) = UDP-N-acetyl-alpha-D-glucosamine + diphosphate. It functions in the pathway nucleotide-sugar biosynthesis; UDP-N-acetyl-alpha-D-glucosamine biosynthesis; N-acetyl-alpha-D-glucosamine 1-phosphate from alpha-D-glucosamine 6-phosphate (route II): step 2/2. It participates in nucleotide-sugar biosynthesis; UDP-N-acetyl-alpha-D-glucosamine biosynthesis; UDP-N-acetyl-alpha-D-glucosamine from N-acetyl-alpha-D-glucosamine 1-phosphate: step 1/1. Its pathway is bacterial outer membrane biogenesis; LPS lipid A biosynthesis. Catalyzes the last two sequential reactions in the de novo biosynthetic pathway for UDP-N-acetylglucosamine (UDP-GlcNAc). The C-terminal domain catalyzes the transfer of acetyl group from acetyl coenzyme A to glucosamine-1-phosphate (GlcN-1-P) to produce N-acetylglucosamine-1-phosphate (GlcNAc-1-P), which is converted into UDP-GlcNAc by the transfer of uridine 5-monophosphate (from uridine 5-triphosphate), a reaction catalyzed by the N-terminal domain. This Prochlorococcus marinus (strain MIT 9211) protein is Bifunctional protein GlmU.